A 264-amino-acid polypeptide reads, in one-letter code: uncharacterized protein (264 aa).

A run of 6 helical transmembrane segments spans residues 23–43 (LIFL…TALI), 59–79 (FDTF…YYFL), 91–111 (LVLS…FYAL), 150–170 (FSEL…VGLL), 190–210 (AGIY…LNVW), and 233–253 (WIWS…LFVI).

Its subcellular location is the cell membrane. This is an uncharacterized protein from Mycoplasma genitalium (strain ATCC 33530 / DSM 19775 / NCTC 10195 / G37) (Mycoplasmoides genitalium).